A 72-amino-acid chain; its full sequence is Translation initiation factor IF-1 (72 aa).

The S1-like domain occupies 1 to 72; that stretch reads MAKEDVIEMQ…SKGRIVFRAR (72 aa).

The protein belongs to the IF-1 family. As to quaternary structure, component of the 30S ribosomal translation pre-initiation complex which assembles on the 30S ribosome in the order IF-2 and IF-3, IF-1 and N-formylmethionyl-tRNA(fMet); mRNA recruitment can occur at any time during PIC assembly.

The protein localises to the cytoplasm. One of the essential components for the initiation of protein synthesis. Stabilizes the binding of IF-2 and IF-3 on the 30S subunit to which N-formylmethionyl-tRNA(fMet) subsequently binds. Helps modulate mRNA selection, yielding the 30S pre-initiation complex (PIC). Upon addition of the 50S ribosomal subunit IF-1, IF-2 and IF-3 are released leaving the mature 70S translation initiation complex. In Pseudoalteromonas translucida (strain TAC 125), this protein is Translation initiation factor IF-1.